Reading from the N-terminus, the 262-residue chain is Putative hydro-lyase BLi00500/BL02808 (262 aa).

It belongs to the D-glutamate cyclase family.

This chain is Putative hydro-lyase BLi00500/BL02808, found in Bacillus licheniformis (strain ATCC 14580 / DSM 13 / JCM 2505 / CCUG 7422 / NBRC 12200 / NCIMB 9375 / NCTC 10341 / NRRL NRS-1264 / Gibson 46).